We begin with the raw amino-acid sequence, 476 residues long: CBL-interacting protein kinase 30 (476 aa).

One can recognise a Protein kinase domain in the interval 17–272 (YKLGRLLGRG…ISKIMDRPWF (256 aa)). Residues 23–31 (LGRGTFAKV) and K46 contribute to the ATP site. D140 serves as the catalytic Proton acceptor. The segment at 158–187 (DFGLSALDGGLRGDGLLHTTCGTPAYVAPE) is activation loop. The disordered stretch occupies residues 296-315 (KEASQQHDDEEDDGFAREKK). Residues 299-353 (SQQHDDEEDDGFAREKKKRSNVIMSSPVIDVRPSSMNAFDIISRSRGLDLSKMFD) enclose the NAF domain. Residues 358-387 (RSEARFSTRETTTAIVSKLEEIAEAGRFSF) are PPI.

Belongs to the protein kinase superfamily. CAMK Ser/Thr protein kinase family. SNF1 subfamily. Mn(2+) serves as cofactor.

It catalyses the reaction L-seryl-[protein] + ATP = O-phospho-L-seryl-[protein] + ADP + H(+). It carries out the reaction L-threonyl-[protein] + ATP = O-phospho-L-threonyl-[protein] + ADP + H(+). Functionally, CIPK serine-threonine protein kinases interact with CBL proteins. Binding of a CBL protein to the regulatory NAF domain of CIPK protein lead to the activation of the kinase in a calcium-dependent manner. The protein is CBL-interacting protein kinase 30 (CIPK30) of Oryza sativa subsp. japonica (Rice).